The following is a 702-amino-acid chain: Ferrioxamine B receptor (702 aa).

Positions 1-30 (MPLEMFMFATTRMALLIGGAIGGATFPLFA) are cleaved as a signal peptide. In terms of domain architecture, TBDR plug spans 55-168 (PDIETPQSVS…PGGIVALTSR (114 aa)). Residues 173-702 (DAGGEVKLFA…SIVGSVSWAF (530 aa)) form the TBDR beta-barrel domain.

Belongs to the TonB-dependent receptor family.

It localises to the cell outer membrane. Ferrioxamine binding and uptake, in association with the TonB protein. May play a role in intestinal colonization. The chain is Ferrioxamine B receptor (foxA) from Salmonella typhimurium (strain SL1344).